We begin with the raw amino-acid sequence, 465 residues long: Ran-binding protein 3-like (465 aa).

In terms of domain architecture, RanBD1 spans 276 to 417; sequence SQPSRKCLLE…ALQSFNKQRD (142 aa).

Interacts with SMAD1, SMAD5 and SMAD8; the interaction (with SMAD at least) increases when SMAD1 is not phosphorylated and mediates SMAD1 nuclear export.

The protein localises to the nucleus. Its subcellular location is the cytoplasm. Functionally, nuclear export factor for BMP-specific SMAD1/5/8 that plays a critical role in terminating BMP signaling and regulating mesenchymal stem cell differentiation by blocking osteoblast differentiation to promote myogenic differention. Directly recognizes dephosphorylated SMAD1/5/8 and mediates their nuclear export in a Ran-dependent manner. In Homo sapiens (Human), this protein is Ran-binding protein 3-like (RANBP3L).